Reading from the N-terminus, the 262-residue chain is Phosphate import ATP-binding protein PstB (262 aa).

The region spanning 16-257 (IDVRNLNFYY…PHRKETEDYI (242 aa)) is the ABC transporter domain. Residue 48 to 55 (GPSGCGKS) coordinates ATP.

The protein belongs to the ABC transporter superfamily. Phosphate importer (TC 3.A.1.7) family. The complex is composed of two ATP-binding proteins (PstB), two transmembrane proteins (PstC and PstA) and a solute-binding protein (PstS).

The protein localises to the cell inner membrane. It carries out the reaction phosphate(out) + ATP + H2O = ADP + 2 phosphate(in) + H(+). Its function is as follows. Part of the ABC transporter complex PstSACB involved in phosphate import. Responsible for energy coupling to the transport system. The chain is Phosphate import ATP-binding protein PstB from Cupriavidus pinatubonensis (strain JMP 134 / LMG 1197) (Cupriavidus necator (strain JMP 134)).